A 386-amino-acid chain; its full sequence is Palmitoyltransferase ZDHHC9 (386 aa).

The Cytoplasmic segment spans residues 1–35; the sequence is MSAVMITRKITRKWEKLPGKNTFCCDGRVMMARQK. Residues 36 to 56 traverse the membrane as a helical segment; sequence GVFYLTLFLIVGTCSLFFAFE. Topologically, residues 57–63 are lumenal; the sequence is CPYLAVH. The helical transmembrane segment at 64 to 84 threads the bilayer; sequence LSPAIPVFAVLLFVFVMAMLL. Residues 85–183 lie on the Cytoplasmic side of the membrane; it reads RTSFSDPGVL…NCVGKRNYRY (99 aa). Residues 139–189 form the DHHC domain; it reads KYCYTCKIFRPPRASHCSICDNCVDRFDHHCPWVGNCVGKRNYRYFYLFTL. Cys-169 serves as the catalytic S-palmitoyl cysteine intermediate. Residues 184–204 traverse the membrane as a helical segment; it reads FYLFTLSLSLLTIYIFAFDIV. Over 205 to 224 the chain is Lumenal; that stretch reads HVVLRSVDSGFVNTLKETPG. A helical transmembrane segment spans residues 225–245; it reads TVLEVLVCFFTLWSVVGLTGF. Topologically, residues 246–386 are cytoplasmic; the sequence is HTYLISLNQT…APAVIKESTH (141 aa). Polar residues predominate over residues 306-334; it reads SCSSAPSNGATTVPVNKSSNPATQTTKSS. Residues 306–386 form a disordered region; the sequence is SCSSAPSNGA…APAVIKESTH (81 aa).

This sequence belongs to the DHHC palmitoyltransferase family. ERF2/ZDHHC9 subfamily.

The protein localises to the endoplasmic reticulum membrane. The protein resides in the golgi apparatus membrane. The catalysed reaction is L-cysteinyl-[protein] + hexadecanoyl-CoA = S-hexadecanoyl-L-cysteinyl-[protein] + CoA. Its function is as follows. Palmitoyltransferase that catalyzes the addition of palmitate onto various protein substrates, such as ADRB2, GSDMD, HRAS, NRAS and CGAS. The sequence is that of Palmitoyltransferase ZDHHC9 from Danio rerio (Zebrafish).